Reading from the N-terminus, the 426-residue chain is Deoxyguanosinetriphosphate triphosphohydrolase-like protein (426 aa).

Positions 1–23 are disordered; the sequence is MYPYSESDAQRLHQEAPKASQLA. The HD domain maps to 67 to 217; it reads RLTHSLEVAQ…MDFSDDIAYS (151 aa).

Belongs to the dGTPase family. Type 2 subfamily.

The protein is Deoxyguanosinetriphosphate triphosphohydrolase-like protein of Corynebacterium efficiens (strain DSM 44549 / YS-314 / AJ 12310 / JCM 11189 / NBRC 100395).